The following is a 505-amino-acid chain: Elsinochrome transporter 1 (505 aa).

Gly residues predominate over residues 1 to 10; sequence MALSGLGSGP. The interval 1–25 is disordered; the sequence is MALSGLGSGPEGNPNNHQGKAIPTL. Residues 35–55 traverse the membrane as a helical segment; it reads FLFSWVSFLVPFWSWYPFSPL. 2 N-linked (GlcNAc...) asparagine glycosylation sites follow: N64 and N80. The interval 221-295 is disordered; the sequence is DTPTGAGKPP…TEKGESLPLT (75 aa). Low complexity predominate over residues 255–267; that stretch reads TPSSPDRSSSTNS. The next 6 helical transmembrane spans lie at 313 to 333, 348 to 368, 391 to 411, 417 to 437, 449 to 469, and 479 to 499; these read VIFS…FGAE, LGLG…LNIV, KALL…IGLA, ATLV…ANGL, VVSG…AIVF, and VFWI…WIKP.

The protein belongs to the major facilitator superfamily. Nitrate/nitrite porter (TC 2.A.1.8) family.

The protein localises to the cell membrane. Functionally, major facilitator-type transporter; part of the gene cluster that mediates the biosynthesis of elsinochromes, pigments consisting of at least four interconvertible tautomers (A, B, C and D) that have a core phenolic quinone to which various side chains are attached and which play an important role in fungal pathogenesis. Once elsinochrome is synthesized, it must be exported outside the fungal cells, which is probably accomplished by the ECT1 transporter, to avoid toxicity. This Elsinoe fawcettii (Citrus scab fungus) protein is Elsinochrome transporter 1.